Consider the following 293-residue polypeptide: Glutamyl-Q tRNA(Asp) synthetase (293 aa).

L-glutamate is bound by residues 8–12 and E44; that span reads RFAPT. The short motif at 11–21 is the 'HIGH' region element; that stretch reads PTPSGYLHFGS. Residues C100, C102, Y114, and C118 each coordinate Zn(2+). L-glutamate contacts are provided by Y171 and R189. The short motif at 227–231 is the 'KMSKS' region element; sequence KLGKS. An ATP-binding site is contributed by K230.

It belongs to the class-I aminoacyl-tRNA synthetase family. GluQ subfamily. The cofactor is Zn(2+).

Its function is as follows. Catalyzes the tRNA-independent activation of glutamate in presence of ATP and the subsequent transfer of glutamate onto a tRNA(Asp). Glutamate is transferred on the 2-amino-5-(4,5-dihydroxy-2-cyclopenten-1-yl) moiety of the queuosine in the wobble position of the QUC anticodon. The chain is Glutamyl-Q tRNA(Asp) synthetase from Pseudomonas aeruginosa (strain LESB58).